A 130-amino-acid polypeptide reads, in one-letter code: Small ribosomal subunit protein uS9 (130 aa).

Positions 111 to 130 are disordered; it reads KERRKYGLKKARKAPQFSKR.

The protein belongs to the universal ribosomal protein uS9 family.

In Thermoanaerobacter sp. (strain X514), this protein is Small ribosomal subunit protein uS9.